The following is a 537-amino-acid chain: 5,6-dihydroxyindole-2-carboxylic acid oxidase (537 aa).

The first 24 residues, 1-24 (MKSYNVLPLAYISLFLMLFYQVWA), serve as a signal peptide directing secretion. The Lumenal, melanosome portion of the chain corresponds to 25-477 (QFPRECANIE…WPGQEFTVSE (453 aa)). 5 cysteine pairs are disulfide-bonded: Cys-30/Cys-41, Cys-42/Cys-65, Cys-56/Cys-99, Cys-101/Cys-110, and Cys-113/Cys-122. Asn-96 and Asn-104 each carry an N-linked (GlcNAc...) asparagine glycan. N-linked (GlcNAc...) asparagine glycosylation is present at Asn-181. Positions 192, 215, and 224 each coordinate Zn(2+). 2 disulfide bridges follow: Cys-258–Cys-261 and Cys-290–Cys-303. 2 N-linked (GlcNAc...) asparagine glycosylation sites follow: Asn-304 and Asn-350. The Zn(2+) site is built by His-377 and His-381. N-linked (GlcNAc...) asparagine glycosylation is present at Asn-385. His-404 lines the Zn(2+) pocket. A helical membrane pass occupies residues 478–501 (IITIAVVAALLLVAAIFGVASCLI). At 502-537 (RSRSTKNEANQPLLTDHYQRYAEDYEELPNPNHSMV) the chain is on the cytoplasmic side.

It belongs to the tyrosinase family. In terms of assembly, monomer. Interacts with ATP7A. Interacts with SLC45A2. Cu(2+) is required as a cofactor. It depends on Zn(2+) as a cofactor. Post-translationally, glycosylated. In terms of tissue distribution, pigment cells.

The protein localises to the melanosome membrane. It catalyses the reaction 2 5,6-dihydroxyindole-2-carboxylate + O2 = 2 indole-5,6-quinone-2-carboxylate + 2 H2O. The protein operates within pigment biosynthesis; melanin biosynthesis. In terms of biological role, plays a role in melanin biosynthesis. Catalyzes the oxidation of 5,6-dihydroxyindole-2-carboxylic acid (DHICA) into indole-5,6-quinone-2-carboxylic acid. May regulate or influence the type of melanin synthesized. Also to a lower extent, capable of hydroxylating tyrosine and producing melanin. In Mus musculus (Mouse), this protein is 5,6-dihydroxyindole-2-carboxylic acid oxidase (Tyrp1).